The primary structure comprises 379 residues: Carbamoyl phosphate synthase small chain (379 aa).

The segment at 1–187 (MNFTPALLAL…GSGHAPAPAS (187 aa)) is CPSase. Positions 48, 239, and 241 each coordinate L-glutamine. One can recognise a Glutamine amidotransferase type-1 domain in the interval 191–378 (KVVAYDFGVK…IELMKPQGVR (188 aa)). The active-site Nucleophile is the C267. Residues L268, Q271, N309, G311, and F312 each contribute to the L-glutamine site. Active-site residues include H351 and E353.

It belongs to the CarA family. In terms of assembly, composed of two chains; the small (or glutamine) chain promotes the hydrolysis of glutamine to ammonia, which is used by the large (or ammonia) chain to synthesize carbamoyl phosphate. Tetramer of heterodimers (alpha,beta)4.

The catalysed reaction is hydrogencarbonate + L-glutamine + 2 ATP + H2O = carbamoyl phosphate + L-glutamate + 2 ADP + phosphate + 2 H(+). It catalyses the reaction L-glutamine + H2O = L-glutamate + NH4(+). The protein operates within amino-acid biosynthesis; L-arginine biosynthesis; carbamoyl phosphate from bicarbonate: step 1/1. It functions in the pathway pyrimidine metabolism; UMP biosynthesis via de novo pathway; (S)-dihydroorotate from bicarbonate: step 1/3. Its function is as follows. Small subunit of the glutamine-dependent carbamoyl phosphate synthetase (CPSase). CPSase catalyzes the formation of carbamoyl phosphate from the ammonia moiety of glutamine, carbonate, and phosphate donated by ATP, constituting the first step of 2 biosynthetic pathways, one leading to arginine and/or urea and the other to pyrimidine nucleotides. The small subunit (glutamine amidotransferase) binds and cleaves glutamine to supply the large subunit with the substrate ammonia. In Thioalkalivibrio sulfidiphilus (strain HL-EbGR7), this protein is Carbamoyl phosphate synthase small chain.